The primary structure comprises 295 residues: Sulfotransferase 1A1 (295 aa).

48–53 serves as a coordination point for 3'-phosphoadenylyl sulfate; the sequence is KSGTTW. 106-108 serves as a coordination point for substrate; sequence KTH. H108 functions as the Proton acceptor in the catalytic mechanism. 3'-phosphoadenylyl sulfate is bound by residues R130, S138, Y193, 227-232, and 255-259; these read TSFKEM and FMRKG. S138 carries the post-translational modification Phosphoserine.

The protein belongs to the sulfotransferase 1 family. Homodimer. In terms of tissue distribution, distal lung parenchyma.

It is found in the cytoplasm. The catalysed reaction is a phenol + 3'-phosphoadenylyl sulfate = an aryl sulfate + adenosine 3',5'-bisphosphate + H(+). It catalyses the reaction 17beta-estradiol + 3'-phosphoadenylyl sulfate = 17beta-estradiol 3-sulfate + adenosine 3',5'-bisphosphate + H(+). It carries out the reaction 4-ethylphenol + 3'-phosphoadenylyl sulfate = 4-ethylphenyl sulfate + adenosine 3',5'-bisphosphate + H(+). The enzyme catalyses 4-nitrophenol + 3'-phosphoadenylyl sulfate = 4-nitrophenyl sulfate + adenosine 3',5'-bisphosphate. The catalysed reaction is dopamine + 3'-phosphoadenylyl sulfate = dopamine 3-O-sulfate + adenosine 3',5'-bisphosphate + H(+). It catalyses the reaction dopamine + 3'-phosphoadenylyl sulfate = dopamine 4-O-sulfate + adenosine 3',5'-bisphosphate + H(+). It carries out the reaction 3,3',5-triiodo-L-thyronine + 3'-phosphoadenylyl sulfate = 3,3',5-triiodo-L-thyronine sulfate + adenosine 3',5'-bisphosphate + H(+). The enzyme catalyses 3,3',5'-triiodo-L-thyronine + 3'-phosphoadenylyl sulfate = 3,3',5'-triiodo-L-thyronine sulfate + adenosine 3',5'-bisphosphate + H(+). The catalysed reaction is 3,3'-diiodo-L-thyronine + 3'-phosphoadenylyl sulfate = 3,3'-diiodo-L-thyronine sulfate + adenosine 3',5'-bisphosphate + H(+). It catalyses the reaction L-thyroxine + 3'-phosphoadenylyl sulfate = L-thyroxine sulfate + adenosine 3',5'-bisphosphate + H(+). Sulfotransferase that utilizes 3'-phospho-5'-adenylyl sulfate (PAPS) as sulfonate donor to catalyze the sulfate conjugation of a wide variety of acceptor molecules bearing a hydroxyl or an amine group. Sulfonation increases the water solubility of most compounds, and therefore their renal excretion, but it can also result in bioactivation to form active metabolites. Displays broad substrate specificity for small phenolic compounds. Plays an important role in the sulfonation of endogenous molecules such as steroid hormones. Mediates also the metabolic activation of carcinogenic N-hydroxyarylamines leading to highly reactive intermediates capable of forming DNA adducts, potentially resulting in mutagenesis. May play a role in gut microbiota-host metabolic interaction. O-sulfonates 4-ethylphenol (4-EP), a dietary tyrosine-derived metabolite produced by gut bacteria. The product 4-EPS crosses the blood-brain barrier and may negatively regulate oligodendrocyte maturation and myelination, affecting the functional connectivity of different brain regions associated with the limbic system. Catalyzes the sulfate conjugation of dopamine. Catalyzes the sulfation of T4 (L-thyroxine/3,5,3',5'-tetraiodothyronine), T3 (3,5,3'-triiodothyronine), rT3 (3,3',5'-triiodothyronine) and 3,3'-T2 (3,3'-diiodothyronine), with a substrate preference of 3,3'-T2 &gt; rT3 &gt; T3 &gt; T4. In Bos taurus (Bovine), this protein is Sulfotransferase 1A1 (SULT1A1).